A 250-amino-acid chain; its full sequence is ATP synthase subunit a (250 aa).

Transmembrane regions (helical) follow at residues alanine 29–serine 49, phenylalanine 84–phenylalanine 104, isoleucine 114–tyrosine 134, valine 143–isoleucine 163, phenylalanine 193–isoleucine 213, and valine 216–leucine 236.

Belongs to the ATPase A chain family. As to quaternary structure, F-type ATPases have 2 components, CF(1) - the catalytic core - and CF(0) - the membrane proton channel. CF(1) has five subunits: alpha(3), beta(3), gamma(1), delta(1), epsilon(1). CF(0) has three main subunits: a(1), b(2) and c(9-12). The alpha and beta chains form an alternating ring which encloses part of the gamma chain. CF(1) is attached to CF(0) by a central stalk formed by the gamma and epsilon chains, while a peripheral stalk is formed by the delta and b chains.

Its subcellular location is the cell inner membrane. Key component of the proton channel; it plays a direct role in the translocation of protons across the membrane. This is ATP synthase subunit a from Rhizobium leguminosarum bv. trifolii (strain WSM2304).